Here is a 213-residue protein sequence, read N- to C-terminus: Pyrrolidone-carboxylate peptidase (213 aa).

Residues glutamate 80, cysteine 143, and histidine 166 contribute to the active site.

The protein belongs to the peptidase C15 family. Homotetramer.

It is found in the cytoplasm. The catalysed reaction is Release of an N-terminal pyroglutamyl group from a polypeptide, the second amino acid generally not being Pro.. Removes 5-oxoproline from various penultimate amino acid residues except L-proline. The polypeptide is Pyrrolidone-carboxylate peptidase (Clavibacter michiganensis subsp. michiganensis (strain NCPPB 382)).